Here is a 245-residue protein sequence, read N- to C-terminus: 1-(5-phosphoribosyl)-5-[(5-phosphoribosylamino)methylideneamino] imidazole-4-carboxamide isomerase (245 aa).

The active-site Proton acceptor is the D7. D129 functions as the Proton donor in the catalytic mechanism.

This sequence belongs to the HisA/HisF family.

The protein localises to the cytoplasm. It carries out the reaction 1-(5-phospho-beta-D-ribosyl)-5-[(5-phospho-beta-D-ribosylamino)methylideneamino]imidazole-4-carboxamide = 5-[(5-phospho-1-deoxy-D-ribulos-1-ylimino)methylamino]-1-(5-phospho-beta-D-ribosyl)imidazole-4-carboxamide. Its pathway is amino-acid biosynthesis; L-histidine biosynthesis; L-histidine from 5-phospho-alpha-D-ribose 1-diphosphate: step 4/9. This is 1-(5-phosphoribosyl)-5-[(5-phosphoribosylamino)methylideneamino] imidazole-4-carboxamide isomerase from Salmonella agona (strain SL483).